A 65-amino-acid chain; its full sequence is Small ribosomal subunit protein bS21 (65 aa).

The interval 45 to 65 (GRLKRSRSKRRAQRANEERNS) is disordered. The segment covering 48–57 (KRSRSKRRAQ) has biased composition (basic residues).

The protein belongs to the bacterial ribosomal protein bS21 family.

In Chlorobium luteolum (strain DSM 273 / BCRC 81028 / 2530) (Pelodictyon luteolum), this protein is Small ribosomal subunit protein bS21.